The sequence spans 270 residues: A-type potassium channel modulatory protein KCNIP2 (270 aa).

A compositionally biased stretch (basic and acidic residues) spans 1 to 17 (MRGQGRKESLSDSRDLD). The tract at residues 1 to 33 (MRGQGRKESLSDSRDLDGSYDQLTGHPPGPTKK) is disordered. S9 bears the Phosphoserine mark. Residues C45 and C46 are each lipidated (S-palmitoyl cysteine). The 57-residue stretch at 81 to 137 (FELSTVCHRPEGLEQLQEQTKFTRKELQVLYRGFKNECPSGIVNEENFKQIYSQFFP) folds into the EF-hand 1; degenerate domain. EF-hand domains follow at residues 140–175 (DSST…ILRG), 176–211 (TIDD…IYDM), and 224–259 (APRE…DENI). Residues D153, N155, D157, S159, D164, D189, N191, D193, C195, E200, D237, N239, D241, and E248 each contribute to the Ca(2+) site. The interval 257-270 (ENIMRSMQLFDNVI) is interaction with KCND2.

This sequence belongs to the recoverin family. As to quaternary structure, component of heteromultimeric potassium channels. Identified in potassium channel complexes containing KCND1, KCND2, KCND3, KCNIP1, KCNIP2, KCNIP3, KCNIP4, DPP6 and DPP10. The KCND2-KCNIP2 channel complex contains four KCND2 and four KCNIP2 subunits. Interacts with KCND2. Probably part of a complex consisting of KCNIP1, KCNIP2 isoform 3 and KCND2. At least isoform 2 and isoform 3 can self-associate to form homodimers and homotetramers. Isoform 3 interacts with KCNIP1 in a calcium-dependent manner. Interacts with KCND3; each KCNIP2 monomer interacts with two adjacent KCND3 subunits, through both the N-terminal inactivation ball of a KCND3 subunit and a C-terminal helix from the adjacent KCND3 subunit, clamping them together; this interaction modulates the channel gating kinetics. Post-translationally, palmitoylated. Palmitoylation enhances association with the plasma membrane. In terms of tissue distribution, expressed in heart ventricle with isoform 1 as most prominent form.

Its subcellular location is the cell membrane. Its function is as follows. Regulatory subunit of Kv4/D (Shal)-type voltage-gated rapidly inactivating A-type potassium channels. Modulates channel density, inactivation kinetics and rate of recovery from inactivation in a calcium-dependent and isoform-specific manner. Involved in KCND2 and KCND3 trafficking to the cell surface. May be required for the expression of I(To) currents in the heart. This chain is A-type potassium channel modulatory protein KCNIP2, found in Mustela putorius furo (European domestic ferret).